A 316-amino-acid polypeptide reads, in one-letter code: MANNEESRGLKSLFDWFANRRKSGSTSLERQEREIADGLWHKCSKCGVLAYTKDLKANQMVCIECGHHNRVDSDERIRQLIDNNTWKPLDEHLRPTDPLEFRDRKLYSDRLRETQDKIGLIDAVRTGLGQINGLPIALGVMDFRFMGGSMGSVVGEKLTRMIEQATQRRYPVVIICTSGGARMQEGMLSLMQMAKISAALQRHKDARLLYIPVLTNPTTGGVTASFAMLGDIILAEPKATIGFAGRRVIEQTLREKLPENFQTAEDLLQHGFVDDIVPRTQLKNTLAQLIALHQPVLTPPHMVLWETMSLTSTAAE.

In terms of domain architecture, CoA carboxyltransferase N-terminal spans Leu-39–Met-308. Positions 43, 46, 62, and 65 each coordinate Zn(2+). Residues Cys-43 to Cys-65 form a C4-type zinc finger.

This sequence belongs to the AccD/PCCB family. In terms of assembly, acetyl-CoA carboxylase is a heterohexamer composed of biotin carboxyl carrier protein (AccB), biotin carboxylase (AccC) and two subunits each of ACCase subunit alpha (AccA) and ACCase subunit beta (AccD). Zn(2+) is required as a cofactor.

The protein resides in the cytoplasm. The catalysed reaction is N(6)-carboxybiotinyl-L-lysyl-[protein] + acetyl-CoA = N(6)-biotinyl-L-lysyl-[protein] + malonyl-CoA. Its pathway is lipid metabolism; malonyl-CoA biosynthesis; malonyl-CoA from acetyl-CoA: step 1/1. Functionally, component of the acetyl coenzyme A carboxylase (ACC) complex. Biotin carboxylase (BC) catalyzes the carboxylation of biotin on its carrier protein (BCCP) and then the CO(2) group is transferred by the transcarboxylase to acetyl-CoA to form malonyl-CoA. This Nostoc punctiforme (strain ATCC 29133 / PCC 73102) protein is Acetyl-coenzyme A carboxylase carboxyl transferase subunit beta.